Reading from the N-terminus, the 274-residue chain is Long chain fatty acid elongase 2 (274 aa).

A run of 7 helical transmembrane segments spans residues 29–49 (MSTF…TIYF), 73–93 (FSLF…GVFM), 115–135 (FWGW…MFLV), 140–160 (PVIF…VVTY), 170–190 (SLAL…VRAL), 201–221 (FITT…GHLV), and 238–258 (VLSI…KFFY).

The protein belongs to the ELO family. In terms of tissue distribution, expressed in various tissues and parts of the body, including the ventral cord, pharyngeal muscles, uterus, and the tail, and most strongly in intestinal cells.

The protein resides in the membrane. It catalyses the reaction hexadecanoyl-CoA + malonyl-CoA + H(+) = 3-oxooctadecanoyl-CoA + CO2 + CoA. It functions in the pathway lipid metabolism; fatty acid biosynthesis. In terms of biological role, catalyzes the first and rate-limiting reaction of the four reactions that constitute the long-chain fatty acids elongation cycle. Uses malonyl-CoA to add 2 carbons per cycle to the chain of long-chain fatty acids. Condensing enzyme responsible for the elongation of palmitate (hexadecanoate, 16:0), also involved in polyunsaturated fatty acid (PUFA) biosynthesis. This Caenorhabditis elegans protein is Long chain fatty acid elongase 2.